The following is a 65-amino-acid chain: Conopeptide Vt3.2 (65 aa).

Positions 1 to 12 (LLFPLATLQLNA) are cleaved as a signal peptide. The propeptide occupies 13–48 (DQPVERNAENIQDLNPDKRFIFMPVPRRRGPYGSVH). Residue S64 is modified to Serine amide.

Belongs to the conotoxin M superfamily. In terms of assembly, homodimer; disulfide-linked. Expressed by the venom duct.

It is found in the secreted. The sequence is that of Conopeptide Vt3.2 from Conus planorbis (Planorbis cone).